A 59-amino-acid polypeptide reads, in one-letter code: DNA gyrase inhibitor YacG (59 aa).

The Zn(2+) site is built by C7, C10, C25, and C29.

The protein belongs to the DNA gyrase inhibitor YacG family. Interacts with GyrB. It depends on Zn(2+) as a cofactor.

Its function is as follows. Inhibits all the catalytic activities of DNA gyrase by preventing its interaction with DNA. Acts by binding directly to the C-terminal domain of GyrB, which probably disrupts DNA binding by the gyrase. In Geobacter sulfurreducens (strain ATCC 51573 / DSM 12127 / PCA), this protein is DNA gyrase inhibitor YacG.